A 247-amino-acid chain; its full sequence is Adiponectin (247 aa).

Positions 1–17 (MLLLQALLFLLILPSHA) are cleaved as a signal peptide. Residues threonine 23 and threonine 24 are each glycosylated (O-linked (GalNAc...) threonine). The residue at position 36 (lysine 36) is a 5-hydroxylysine. Residue cysteine 39 is modified to S-(2-succinyl)cysteine. Positions 44–105 (AGIPGHPGHN…GFPGTPGRKG (62 aa)) are disordered. A Collagen-like domain is found at 45-110 (GIPGHPGHNG…PGRKGEPGEA (66 aa)). 3 positions are modified to 4-hydroxyproline: proline 47, proline 50, and proline 56. Basic and acidic residues predominate over residues 58-73 (RDGRDGTPGEKGEKGD). Lysine 68, lysine 71, and lysine 80 each carry 5-hydroxylysine; alternate. Lysine 68, lysine 71, and lysine 80 each carry an O-linked (Gal...) hydroxylysine; alternate glycan. At proline 94 the chain carries 4-hydroxyproline. Position 104 is a 5-hydroxylysine; alternate (lysine 104). Lysine 104 carries O-linked (Gal...) hydroxylysine; alternate glycosylation. Positions 111–247 (AYVYRSAFSV…TGFLLYHDTN (137 aa)) constitute a C1q domain.

In terms of assembly, homomultimer. Forms trimers, hexamers and 12- to 18-mers. The trimers (low molecular weight complexes / LMW) are assembled via non-covalent interactions of the collagen-like domains in a triple helix and hydrophobic interactions within the globular C1q domain. Several trimers can associate to form disulfide-linked hexamers (middle molecular weight complexes / MMW) and larger complexes (higher molecular weight / HMW). The HMW-complex assembly is also modulated by the degree of lysine hydroxylation and glycosylation. LMW, MMW and HMW complexes bind to HBEGF, MMW and HMW complexes bind to PDGFB, and HMW complex binds to FGF2. Interacts with CTRP9 via the C1q domain (heterotrimeric complex). Post-translationally, HMW complexes are more extensively glycosylated than smaller oligomers. Hydroxylation and glycosylation of the lysine residues within the collagen-like domain of adiponectin seem to be critically involved in regulating the formation and/or secretion of HMW complexes and consequently contribute to the insulin-sensitizing activity of adiponectin in hepatocytes. O-glycosylated. Not N-glycosylated O-linked glycans on hydroxylysine residues consist of Glc-Gal disaccharides bound to the oxygen atom of post-translationally added hydroxyl groups. O-linked glycosylation in the N-terminal is disialylated with the structure Neu5Acalpha2-&gt;8Neu5Acalpha2-&gt;3Gal. Sialylated by alpha 2,8-sialyltransferase III. In terms of processing, succination of Cys-39 by the Krebs cycle intermediate fumarate, which leads to S-(2-succinyl)cysteine residues, inhibits polymerization and secretion of adiponectin. Adiponectin is a major target for succination in both adipocytes and adipose tissue of diabetic mice. It was proposed that succination of proteins is a biomarker of mitochondrial stress and accumulation of Krebs cycle intermediates in adipose tissue in diabetes and that succination of adiponectin may contribute to the decrease in plasma adiponectin in diabetes. Synthesized exclusively by adipocytes and secreted into plasma.

The protein resides in the secreted. With respect to regulation, polymerization and secretion of adiponectin is inhibited by succination of cysteine residues by the Krebs cycle intermediate fumarate, which leads to S-(2-succinyl)cysteine residues. Functionally, important adipokine involved in the control of fat metabolism and insulin sensitivity, with direct anti-diabetic, anti-atherogenic and anti-inflammatory activities. Stimulates AMPK phosphorylation and activation in the liver and the skeletal muscle, enhancing glucose utilization and fatty-acid combustion. Antagonizes TNF-alpha by negatively regulating its expression in various tissues such as liver and macrophages, and also by counteracting its effects. Inhibits endothelial NF-kappa-B signaling through a cAMP-dependent pathway. May play a role in cell growth, angiogenesis and tissue remodeling by binding and sequestering various growth factors with distinct binding affinities, depending on the type of complex, LMW, MMW or HMW. The sequence is that of Adiponectin (Adipoq) from Mus musculus (Mouse).